The primary structure comprises 344 residues: Holliday junction branch migration complex subunit RuvB (344 aa).

The segment covering 1–25 (MTDSDPTLRPDRLPEDVQATDDRAL) has biased composition (basic and acidic residues). Residues 1–33 (MTDSDPTLRPDRLPEDVQATDDRALRPQSLDDF) form a disordered region. Residues 1-186 (MTDSDPTLRP…FGIPTRLNFY (186 aa)) are large ATPase domain (RuvB-L). Residues Leu25, Arg26, Gly67, Lys70, Thr71, Thr72, 133–135 (EDF), Arg176, Tyr186, and Arg223 contribute to the ATP site. Thr71 is a Mg(2+) binding site. Residues 187–257 (TIAELDQIVA…IADSALTRLG (71 aa)) form a small ATPAse domain (RuvB-S) region. Residues 260 to 344 (DLGLDGADRR…PKRPDQGELI (85 aa)) are head domain (RuvB-H). DNA-binding residues include Arg296, Arg315, and Arg320.

It belongs to the RuvB family. In terms of assembly, homohexamer. Forms an RuvA(8)-RuvB(12)-Holliday junction (HJ) complex. HJ DNA is sandwiched between 2 RuvA tetramers; dsDNA enters through RuvA and exits via RuvB. An RuvB hexamer assembles on each DNA strand where it exits the tetramer. Each RuvB hexamer is contacted by two RuvA subunits (via domain III) on 2 adjacent RuvB subunits; this complex drives branch migration. In the full resolvosome a probable DNA-RuvA(4)-RuvB(12)-RuvC(2) complex forms which resolves the HJ.

The protein resides in the cytoplasm. It catalyses the reaction ATP + H2O = ADP + phosphate + H(+). Its function is as follows. The RuvA-RuvB-RuvC complex processes Holliday junction (HJ) DNA during genetic recombination and DNA repair, while the RuvA-RuvB complex plays an important role in the rescue of blocked DNA replication forks via replication fork reversal (RFR). RuvA specifically binds to HJ cruciform DNA, conferring on it an open structure. The RuvB hexamer acts as an ATP-dependent pump, pulling dsDNA into and through the RuvAB complex. RuvB forms 2 homohexamers on either side of HJ DNA bound by 1 or 2 RuvA tetramers; 4 subunits per hexamer contact DNA at a time. Coordinated motions by a converter formed by DNA-disengaged RuvB subunits stimulates ATP hydrolysis and nucleotide exchange. Immobilization of the converter enables RuvB to convert the ATP-contained energy into a lever motion, pulling 2 nucleotides of DNA out of the RuvA tetramer per ATP hydrolyzed, thus driving DNA branch migration. The RuvB motors rotate together with the DNA substrate, which together with the progressing nucleotide cycle form the mechanistic basis for DNA recombination by continuous HJ branch migration. Branch migration allows RuvC to scan DNA until it finds its consensus sequence, where it cleaves and resolves cruciform DNA. The polypeptide is Holliday junction branch migration complex subunit RuvB (Jannaschia sp. (strain CCS1)).